We begin with the raw amino-acid sequence, 314 residues long: Putative peptide transport system permease protein BRA1092/BS1330_II1084 (314 aa).

6 consecutive transmembrane segments (helical) span residues 12–32 (AIPVMLIVAILTFLLMKLLPG), 101–121 (LALLAFAITIPVGIIMGVVAA), 135–155 (LALLGVSVPSFWLAILAVILF), 177–197 (WLRSLILPASILALFQIGYLA), 237–257 (VSVLTVSGYIFSLLIGGSVVI), and 286–306 (MLFLGFLFVAINVLVDILYTI). Positions 95–304 (LPVTISLALL…AINVLVDILY (210 aa)) constitute an ABC transmembrane type-1 domain.

It belongs to the binding-protein-dependent transport system permease family. As to quaternary structure, the complex is composed of two ATP-binding proteins (BRA1094), two transmembrane proteins (BRA1092 and BRA1093) and a solute-binding protein (BRA1090).

It localises to the cell inner membrane. In terms of biological role, probably part of an ABC transporter complex that could be involved in peptide import. Probably responsible for the translocation of the substrate across the membrane. The polypeptide is Putative peptide transport system permease protein BRA1092/BS1330_II1084 (Brucella suis biovar 1 (strain 1330)).